A 619-amino-acid chain; its full sequence is Sodium-dependent dopamine transporter (619 aa).

The Cytoplasmic portion of the chain corresponds to 1–56 (MSKSKCSVGPMSSVVAPAKEPNAVGPREVELILVKEQNGVQLTNSTLINPPQTPVE). Residues 57 to 95 (VQERETWSKKIDFLLSVIGFAVDLANVWRFPYLCYKNGG) traverse the membrane as a discontinuously helical segment. 5 residues coordinate Na(+): Gly75, Ala77, Val78, Asp79, and Asn82. Position 79 (Asp79) interacts with dopamine. Transmembrane regions (helical) follow at residues 96–127 (GAFL…NREG) and 128–171 (AAGV…FSSF). Residues Ser149 and Gly153 each coordinate dopamine. Residues 172–235 (TMDLPWIHCN…SRGIDDLGPP (64 aa)) are Extracellular-facing. Cys180 and Cys189 are joined by a disulfide. Asn181, Asn188, Asn196, and Asn204 each carry an N-linked (GlcNAc...) asparagine glycan. The next 2 membrane-spanning stretches (helical) occupy residues 236-255 (RWQL…FSLW) and 256-286 (KGVK…GVTL). Topologically, residues 287–305 (PGAMDGIRAYLSVDFYRLC) are extracellular. Residues 306–334 (EASVWIDAATQVCFSLGVGFGVLIAFSSY) form a discontinuously helical membrane-spanning segment. A chloride-binding site is contributed by Gln316. Position 319 (Phe319) interacts with dopamine. Na(+)-binding residues include Ser320 and Asn352. Ser320 is a binding site for chloride. A helical transmembrane segment spans residues 335-375 (NKFTNNCYRDAIITTSINSLTSFSSGFVVFSFLGYMAQKHN). Ser356 is a chloride binding site. Residues 376 to 399 (VPIRDVATDGPGLIFIIYPEAIAT) lie on the Extracellular side of the membrane. A run of 3 helical transmembrane segments spans residues 400-441 (LPLS…QLLH), 442-465 (RHRE…CVTN), and 466-498 (GGIY…AWFY). Leu417, Asp420, and Ser421 together coordinate Na(+). Ser421 and Ala422 together coordinate dopamine. The Cytoplasmic segment spans residues 499–515 (GVQQFSDDIKQMTGQRP). A helical membrane pass occupies residues 516–541 (NLYWRLCWKLVSPCFLLYVVVVSIVT). Residues 542–552 (FRPPHYGAYIF) are Extracellular-facing. Residues 553–582 (PDWANALGWIIATSSMAMVPIYATYKFCSL) form a helical membrane-spanning segment. The tract at residues 560–589 (GWIIATSSMAMVPIYATYKFCSLPGSFREK) is interaction with TGFB1I1. Topologically, residues 583–619 (PGSFREKLAYAITPEKDRQLVDRGEVRQFTLRHWLLV) are cytoplasmic.

It belongs to the sodium:neurotransmitter symporter (SNF) (TC 2.A.22) family. SLC6A3 subfamily. In terms of assembly, monomer. Homooligomer; disulfide-linked. Interacts with PRKCABP and TGFB1I1. Interacts (via N-terminus) with SYNGR3 (via N-terminus). Interacts with SLC18A2. Interacts with TOR1A (ATP-bound); TOR1A regulates SLC6A3 subcellular location. Interacts with alpha-synuclein/SNCA. Interacts with SEPTIN4. In terms of tissue distribution, found in the substantia nigra and ventral tegmental dopamine neurons, in fibers of the medial forebrain bundle ascending into the striatum, and within dense fiber networks and varicosities in the dorsal and ventral striatum (at protein level). Lower expression in the cortex (at protein level). Absent from the corpus callosum. Expressed throughout the retina at postnatal day 8.

It is found in the cell membrane. Its subcellular location is the cell projection. The protein resides in the neuron projection. The protein localises to the axon. It catalyses the reaction dopamine(out) + chloride(out) + Na(+)(out) = dopamine(in) + chloride(in) + Na(+)(in). The enzyme catalyses (R)-noradrenaline(out) + chloride(out) + Na(+)(out) = (R)-noradrenaline(in) + chloride(in) + Na(+)(in). It carries out the reaction dopamine(out) + chloride(out) + 2 Na(+)(out) = dopamine(in) + chloride(in) + 2 Na(+)(in). With respect to regulation, inhibited by amphetamine, bupropion, cocaine and ritalin. Inhibited by zinc ions. Mediates sodium- and chloride-dependent transport of dopamine. Also mediates sodium- and chloride-dependent transport of norepinephrine (also known as noradrenaline). Regulator of light-dependent retinal hyaloid vessel regression, downstream of OPN5 signaling. The protein is Sodium-dependent dopamine transporter (Slc6a3) of Mus musculus (Mouse).